We begin with the raw amino-acid sequence, 77 residues long: MSIEERVKKIIVDQLGVKAEDVKPEASFIEDLGADSLDTVELVMALEEEFDIEIPDEEAEKITTVQSAIDYVAKANA.

Residues 1–76 (MSIEERVKKI…SAIDYVAKAN (76 aa)) form the Carrier domain. S36 is subject to O-(pantetheine 4'-phosphoryl)serine.

The protein belongs to the acyl carrier protein (ACP) family. Post-translationally, 4'-phosphopantetheine is transferred from CoA to a specific serine of apo-ACP by AcpS. This modification is essential for activity because fatty acids are bound in thioester linkage to the sulfhydryl of the prosthetic group.

Its subcellular location is the cytoplasm. It participates in lipid metabolism; fatty acid biosynthesis. Its function is as follows. Carrier of the growing fatty acid chain in fatty acid biosynthesis. The protein is Acyl carrier protein of Haemophilus ducreyi (strain 35000HP / ATCC 700724).